A 339-amino-acid chain; its full sequence is Mitogen-activated protein kinase kinase kinase 18 (339 aa).

Residues 3–263 (WTRGKTLGRG…ASQLLNHPFL (261 aa)) form the Protein kinase domain. Residues 9-17 (LGRGSTATV) and K32 each bind ATP. D131 functions as the Proton acceptor in the catalytic mechanism. Phosphoserine is present on S301.

This sequence belongs to the protein kinase superfamily. Ser/Thr protein kinase family. Interacts with ABI1. Binds to MKK3. Associates with SRK2E within the nucleus. In terms of processing, autophosphorylated. Unstable protein degraded by the proteasome pathway; this degradation is promoted by ABI1, but blocked by ABA. In terms of tissue distribution, expressed in roots, leaves and flowers.

Its subcellular location is the nucleus. It catalyses the reaction L-seryl-[protein] + ATP = O-phospho-L-seryl-[protein] + ADP + H(+). The enzyme catalyses L-threonyl-[protein] + ATP = O-phospho-L-threonyl-[protein] + ADP + H(+). With respect to regulation, kinase activity is activated by abscisic acid (ABA). Inhibited by ABI1. Activated by SRK2E. Component of the abscisic acid (ABA) signaling pathway that acts as ABA signal transducer in the context of abiotic stresses. Triggers MPK1, MPK2, MPK7 and MPK14 activation in a MKK3-dependent manner and MPK6 activation in a MKK3-independent manner. Mediates the ABA-dependent activation of the MKK3-MPK7 module. Positive regulator of ABA responses leading to the induction of gene expression (e.g. RD29B and RAB18) and involved in various responses including stomatal development, stomatal movement, inhibition of germination and root growth. Promotes leaf senescence. This Arabidopsis thaliana (Mouse-ear cress) protein is Mitogen-activated protein kinase kinase kinase 18.